A 367-amino-acid polypeptide reads, in one-letter code: Phosphoribosylaminoimidazole-succinocarboxamide synthase (367 aa).

The protein belongs to the SAICAR synthetase family.

It carries out the reaction 5-amino-1-(5-phospho-D-ribosyl)imidazole-4-carboxylate + L-aspartate + ATP = (2S)-2-[5-amino-1-(5-phospho-beta-D-ribosyl)imidazole-4-carboxamido]succinate + ADP + phosphate + 2 H(+). Its pathway is purine metabolism; IMP biosynthesis via de novo pathway; 5-amino-1-(5-phospho-D-ribosyl)imidazole-4-carboxamide from 5-amino-1-(5-phospho-D-ribosyl)imidazole-4-carboxylate: step 1/2. This chain is Phosphoribosylaminoimidazole-succinocarboxamide synthase, found in Aliivibrio fischeri (strain ATCC 700601 / ES114) (Vibrio fischeri).